A 386-amino-acid chain; its full sequence is MSSRGVTAPQGFVAAGATAGIKPSGNKDMALVVNQGPEFVGAAVFTRNRVVASPVKYTKKAVANGTLRAVLYNSGNANACNGVQGDKDVHEIVDYLASKLKVDPLDIAACSTGLIGEPLPVTMIKAGVDKLIPALGDNGGEAADSIMTTDTVAKETVVKCNGWTLGGMGKGVGMMAPSLATMLVCLTTDACVTQAQAHAALSKACDVTFNTLDIDGSTSTNDTVILLANGASGITPTESEFNDAVLQACADIADQLQADAEGVTKRVRITVTGTTTDSQALNAARTLGRDNLFKCAMFGSDPNWGRVLAAVGMADADMDPDNISVYFNDQPVCLQSGGTPEARQVDLSGIDIDVRVDLGTGGPGKAFVRTTDLSHQYVEINSAYSS.

The substrate site is built by T148, K170, T181, E261, N381, and S386. Residue T181 is the Nucleophile of the active site.

The protein belongs to the ArgJ family. Heterotetramer of two alpha and two beta chains.

The protein localises to the cytoplasm. It carries out the reaction N(2)-acetyl-L-ornithine + L-glutamate = N-acetyl-L-glutamate + L-ornithine. It catalyses the reaction L-glutamate + acetyl-CoA = N-acetyl-L-glutamate + CoA + H(+). It functions in the pathway amino-acid biosynthesis; L-arginine biosynthesis; L-ornithine and N-acetyl-L-glutamate from L-glutamate and N(2)-acetyl-L-ornithine (cyclic): step 1/1. Its pathway is amino-acid biosynthesis; L-arginine biosynthesis; N(2)-acetyl-L-ornithine from L-glutamate: step 1/4. Its function is as follows. Catalyzes two activities which are involved in the cyclic version of arginine biosynthesis: the synthesis of N-acetylglutamate from glutamate and acetyl-CoA as the acetyl donor, and of ornithine by transacetylation between N(2)-acetylornithine and glutamate. In Corynebacterium diphtheriae (strain ATCC 700971 / NCTC 13129 / Biotype gravis), this protein is Arginine biosynthesis bifunctional protein ArgJ.